The chain runs to 94 residues: Protein EGG APPARATUS-1 (94 aa).

Over 1-15 (MSSCPAIVNMKDDDG) the chain is Cytoplasmic. Residues 16 to 36 (IGAMGAAVAFAAMGVFGIYFL) traverse the membrane as a helical; Signal-anchor for type II membrane protein segment. The Extracellular segment spans residues 37–94 (WPVVGPTSAGMMMKAPGAAGWVICRAVFEANPQLYFTILRTAGAAAAAATFAACSIAS).

Post-translationally, possible proteolysis of the C-terminal region from the predicted transmembrane domain to permit secretion and transport of the mature protein to the cell walls of the nucellus, allowing the spreading from the egg cell apparatus to the micropylar opening of the ovule. As to expression, expressed only in the egg apparatus, consisting of the egg cell and two synergids. Not detected in the central cell, antipodals, and nucellar and integumental cells.

The protein resides in the membrane. Involved in short-range signaling required for pollen tube attraction by the female gametophyte. Required for female fertility. In Zea mays (Maize), this protein is Protein EGG APPARATUS-1 (Ea1).